The primary structure comprises 700 residues: MADRVMCQELATPGSHYRRPKTGVPSTNVVYANGGGSWRAAPRQTQRLPRQTVQQYATGTPATGSAGRHSGRAFATAGATEEQTVEFNGAAVMGLPATPRTTKQARNKSEEAINDLLTRIPDIGKLFDVHSRIGNGTFSTVLLGTLRRESHLPDSLRRKFAIKHHIPTSHPDRIMKELQCMTKMGGKENVVGIHCCMRYDASAAFVMPFMAHDRFQDFYTRMDVPEIRQYMRNLLVALRHVHKFDVIHRDVKPSNFLYNRRRREFLLVDFGLAQHVNPPAARSSGSAAAIAAANNKNNNNNNNNNSKRPRERESKGDVQQIALDAGLGGAVKRMRLHEESNKMPLKPVNDIAPSDAPEQSVDGSNHVQPQLVQQEQQQLQPQQQQQQQQQQQQSQQQQQPQQQSQQQHPQRQPQLAQMDQTASTPSGSKYNTNRNVSAAAANNAKCVCFANPSVCLNCLMKKEVHASRAGTPGYRPPEVLLKYPDQTTAVDVWAAGVIFLSIMSTVYPFFKAPNDFIALAEIVTIFGDQAIRKTALALDRMITLSQRSRPLNLRKLCLRFRYRSVFSDAKLLKSYESVDGSCEVCRNCDQYFFNCLCEDSDYLTEPLDAYECFPPSAYDLLDRLLEINPHKRITAEEALKHPFFTAAEEAEQTEQDQLANGTPRKMRRQRYQSHRTVAASQEQVKQQVALDLQQAAINKL.

One can recognise a Protein kinase domain in the interval 127–644 (FDVHSRIGNG…AEEALKHPFF (518 aa)). ATP-binding positions include 133 to 141 (IGNGTFSTV) and lysine 163. The active-site Proton acceptor is the aspartate 250.

The protein belongs to the protein kinase superfamily. Ser/Thr protein kinase family. Component of the Dbf4-dependent kinase (DDK) complex consisting of Cdc7 and the Dbf4 ortholog chif. Interacts with chif (via the processed polypeptide Chiffon-A); the interaction is direct.

It catalyses the reaction L-seryl-[protein] + ATP = O-phospho-L-seryl-[protein] + ADP + H(+). The enzyme catalyses L-threonyl-[protein] + ATP = O-phospho-L-threonyl-[protein] + ADP + H(+). Its activity is regulated as follows. Activated by chif. Inhibited by the synthetic compound XL413. Functionally, catalytic component of the Dbf4-dependent kinase (DDK) complex. Phosphorylates components of the pre-replication complex, including Mcm2 and, to a lesser extent, Mcm4. Phosphorylates histones, including H3 and H2B. Required for DNA replication and mitotic proliferation, including during the endoreplication and amplification stages of DNA replication in egg chamber follicle cells of the ovary. The sequence is that of non-specific serine/threonine protein kinase Cdc7 from Drosophila melanogaster (Fruit fly).